We begin with the raw amino-acid sequence, 406 residues long: Fructose-1,6-bisphosphatase, chloroplastic (406 aa).

The transit peptide at 1 to 47 (MAAAATTSSHLLLLSRQQAAASLQCGLSFRRQPGRLAGGSSAPSVRC) directs the protein to the chloroplast. Residues Glu-128, Glu-157, Asp-178, Leu-180, and Asp-181 each contribute to the Mg(2+) site. 181 to 184 (DGSS) contacts substrate. A disulfide bond links Cys-222 and Cys-227. Substrate-binding residues include Asn-286, Tyr-318, Tyr-336, Tyr-338, and Lys-348. Residue Glu-354 coordinates Mg(2+).

It belongs to the FBPase class 1 family. In terms of assembly, homotetramer. Mg(2+) is required as a cofactor.

It is found in the plastid. It localises to the chloroplast stroma. It catalyses the reaction beta-D-fructose 1,6-bisphosphate + H2O = beta-D-fructose 6-phosphate + phosphate. It functions in the pathway carbohydrate biosynthesis; Calvin cycle. With respect to regulation, inhibited by sodium chloride. Functionally, catalyzes the irreversible reaction from fructose-1,6-bisphosphate to fructose-6-phosphate and inorganic phosphate, to regenerate the primary CO(2) acceptor molecule, ribulose-1,5-bisphosphate. Involved in the regulation of photosynthetic performance and sucrose synthesis. In Oryza sativa subsp. indica (Rice), this protein is Fructose-1,6-bisphosphatase, chloroplastic.